The chain runs to 311 residues: Ferrochelatase (311 aa).

Fe cation-binding residues include His179 and Glu260.

Belongs to the ferrochelatase family.

It is found in the cytoplasm. The enzyme catalyses heme b + 2 H(+) = protoporphyrin IX + Fe(2+). Its pathway is porphyrin-containing compound metabolism; protoheme biosynthesis; protoheme from protoporphyrin-IX: step 1/1. Its function is as follows. Catalyzes the ferrous insertion into protoporphyrin IX. This is Ferrochelatase from Helicobacter hepaticus (strain ATCC 51449 / 3B1).